A 595-amino-acid chain; its full sequence is UvrABC system protein C (595 aa).

A GIY-YIG domain is found at 17–94 (FEPGCYLMKD…IKQYQPRYNI (78 aa)). Residues 199 to 234 (KTIIKNLESRMQAASENLEFEQAKEYRDLIQNIHNL) enclose the UVR domain.

The protein belongs to the UvrC family. In terms of assembly, interacts with UvrB in an incision complex.

Its subcellular location is the cytoplasm. In terms of biological role, the UvrABC repair system catalyzes the recognition and processing of DNA lesions. UvrC both incises the 5' and 3' sides of the lesion. The N-terminal half is responsible for the 3' incision and the C-terminal half is responsible for the 5' incision. This Staphylococcus carnosus (strain TM300) protein is UvrABC system protein C.